The primary structure comprises 217 residues: Pyridoxine/pyridoxamine 5'-phosphate oxidase (217 aa).

Substrate contacts are provided by residues 13–16 (RREY) and K71. FMN is bound by residues 66 to 71 (RIVLLK), 81 to 82 (YT), R87, K88, and Q110. Substrate contacts are provided by Y128, R132, and S136. FMN is bound by residues 145–146 (QS) and W190. Position 196-198 (196-198 (RLH)) interacts with substrate. R200 contacts FMN.

It belongs to the pyridoxamine 5'-phosphate oxidase family. In terms of assembly, homodimer. FMN is required as a cofactor.

It carries out the reaction pyridoxamine 5'-phosphate + O2 + H2O = pyridoxal 5'-phosphate + H2O2 + NH4(+). The enzyme catalyses pyridoxine 5'-phosphate + O2 = pyridoxal 5'-phosphate + H2O2. The protein operates within cofactor metabolism; pyridoxal 5'-phosphate salvage; pyridoxal 5'-phosphate from pyridoxamine 5'-phosphate: step 1/1. It functions in the pathway cofactor metabolism; pyridoxal 5'-phosphate salvage; pyridoxal 5'-phosphate from pyridoxine 5'-phosphate: step 1/1. Its function is as follows. Catalyzes the oxidation of either pyridoxine 5'-phosphate (PNP) or pyridoxamine 5'-phosphate (PMP) into pyridoxal 5'-phosphate (PLP). This is Pyridoxine/pyridoxamine 5'-phosphate oxidase from Serratia proteamaculans (strain 568).